The primary structure comprises 117 residues: Large ribosomal subunit protein bL20 (117 aa).

This sequence belongs to the bacterial ribosomal protein bL20 family.

Functionally, binds directly to 23S ribosomal RNA and is necessary for the in vitro assembly process of the 50S ribosomal subunit. It is not involved in the protein synthesizing functions of that subunit. In Carboxydothermus hydrogenoformans (strain ATCC BAA-161 / DSM 6008 / Z-2901), this protein is Large ribosomal subunit protein bL20.